The chain runs to 310 residues: Methionyl-tRNA formyltransferase (310 aa).

Residue 106–109 (SLLP) participates in (6S)-5,6,7,8-tetrahydrofolate binding.

Belongs to the Fmt family.

It carries out the reaction L-methionyl-tRNA(fMet) + (6R)-10-formyltetrahydrofolate = N-formyl-L-methionyl-tRNA(fMet) + (6S)-5,6,7,8-tetrahydrofolate + H(+). In terms of biological role, attaches a formyl group to the free amino group of methionyl-tRNA(fMet). The formyl group appears to play a dual role in the initiator identity of N-formylmethionyl-tRNA by promoting its recognition by IF2 and preventing the misappropriation of this tRNA by the elongation apparatus. This Fervidobacterium nodosum (strain ATCC 35602 / DSM 5306 / Rt17-B1) protein is Methionyl-tRNA formyltransferase.